The following is a 128-amino-acid chain: Large ribosomal subunit protein bL20c (128 aa).

Belongs to the bacterial ribosomal protein bL20 family.

It localises to the plastid. Its function is as follows. Binds directly to 23S ribosomal RNA and is necessary for the in vitro assembly process of the 50S ribosomal subunit. It is not involved in the protein synthesizing functions of that subunit. The sequence is that of Large ribosomal subunit protein bL20c (rpl20) from Lathraea clandestina (Purple toothwort).